A 430-amino-acid chain; its full sequence is Serine--tRNA ligase (430 aa).

Residues 47-66 (AQAEQNKASKEAGAAKGRGD) form a disordered region. Residue 231-233 (TSE) participates in L-serine binding. ATP is bound at residue 262-264 (RSE). E285 lines the L-serine pocket. 349-352 (EISS) contributes to the ATP binding site. S385 lines the L-serine pocket.

It belongs to the class-II aminoacyl-tRNA synthetase family. Type-1 seryl-tRNA synthetase subfamily. Homodimer. The tRNA molecule binds across the dimer.

It is found in the cytoplasm. The enzyme catalyses tRNA(Ser) + L-serine + ATP = L-seryl-tRNA(Ser) + AMP + diphosphate + H(+). It catalyses the reaction tRNA(Sec) + L-serine + ATP = L-seryl-tRNA(Sec) + AMP + diphosphate + H(+). The protein operates within aminoacyl-tRNA biosynthesis; selenocysteinyl-tRNA(Sec) biosynthesis; L-seryl-tRNA(Sec) from L-serine and tRNA(Sec): step 1/1. Its function is as follows. Catalyzes the attachment of serine to tRNA(Ser). Is also able to aminoacylate tRNA(Sec) with serine, to form the misacylated tRNA L-seryl-tRNA(Sec), which will be further converted into selenocysteinyl-tRNA(Sec). This is Serine--tRNA ligase from Paracoccus denitrificans (strain Pd 1222).